The following is a 302-amino-acid chain: 1,2-dihydroxynaphthalene dioxygenase (302 aa).

VOC domains are found at residues 9–124 (ELGY…IFWG) and 149–270 (GLGH…PGWR). His-152 is a binding site for Fe cation. Residues His-152, 199-200 (DH), His-215, and Tyr-256 each bind substrate. His-215 contributes to the Fe cation binding site. Residue Glu-266 participates in Fe cation binding.

This sequence belongs to the extradiol ring-cleavage dioxygenase family. Fe(2+) is required as a cofactor.

The enzyme catalyses naphthalene-1,2-diol + O2 = 2-hydroxychromene-2-carboxylate + H(+). It participates in aromatic compound metabolism; naphthalene degradation. In terms of biological role, involved in the naphthalene catabolic pathway. Catalyzes the meta-cleavage of 1,2-dihydroxynaphthalene (1,2-DHN) to yield 2-hydroxychromene-2-carboxylic acid. The protein is 1,2-dihydroxynaphthalene dioxygenase (nahC) of Pseudomonas putida (Arthrobacter siderocapsulatus).